The sequence spans 115 residues: U3-lycotoxin-Ls1b (115 aa).

Positions 1–20 (MKFVLLFGVLLVTLFSYSSA) are cleaved as a signal peptide. Positions 21 to 44 (EMLDDFDQADEDELLSLIEKEEAR) are excised as a propeptide. 4 cysteine pairs are disulfide-bonded: cysteine 48/cysteine 63, cysteine 55/cysteine 72, cysteine 62/cysteine 87, and cysteine 74/cysteine 85.

Belongs to the neurotoxin 19 (CSTX) family. 01 subfamily. In terms of tissue distribution, expressed by the venom gland.

The protein resides in the secreted. The protein is U3-lycotoxin-Ls1b of Lycosa singoriensis (Wolf spider).